Here is a 190-residue protein sequence, read N- to C-terminus: UPF0316 protein Mboo_0605 (190 aa).

3 helical membrane-spanning segments follow: residues 3 to 23, 41 to 61, and 67 to 87; these read IGTFWSVAAIPLLILVARIAE, LAAYVGIVKTGIWLISTGLVL, and FWNLFAYLAGYGMGTVLGMEI.

This sequence belongs to the UPF0316 family.

It is found in the cell membrane. The polypeptide is UPF0316 protein Mboo_0605 (Methanoregula boonei (strain DSM 21154 / JCM 14090 / 6A8)).